Reading from the N-terminus, the 230-residue chain is Cytochrome c oxidase subunit 2 (230 aa).

Topologically, residues 1-29 are mitochondrial intermembrane; sequence NNFFQGYNLLFQHSLFASYMDWFHAFNCS. Residues 30-50 traverse the membrane as a helical segment; the sequence is LLLGVLVFVTLLFGYLIFSTF. Residues 51-63 are Mitochondrial matrix-facing; sequence YFKSKKIEYQFGE. A helical membrane pass occupies residues 64–84; sequence LLCSIFPTIILLMQMVPSLSL. Over 85–230 the chain is Mitochondrial intermembrane; the sequence is LYYYGLMNLD…FKSWCFGTME (146 aa). Residues H163, C198, E200, C202, H206, and M209 each contribute to the Cu cation site. E200 contacts Mg(2+).

Belongs to the cytochrome c oxidase subunit 2 family. Component of the cytochrome c oxidase (complex IV, CIV), a multisubunit enzyme composed of a catalytic core of 3 subunits and several supernumerary subunits. The complex exists as a monomer or a dimer and forms supercomplexes (SCs) in the inner mitochondrial membrane with ubiquinol-cytochrome c oxidoreductase (cytochrome b-c1 complex, complex III, CIII). Requires Cu cation as cofactor.

It is found in the mitochondrion inner membrane. It catalyses the reaction 4 Fe(II)-[cytochrome c] + O2 + 8 H(+)(in) = 4 Fe(III)-[cytochrome c] + 2 H2O + 4 H(+)(out). Its function is as follows. Component of the cytochrome c oxidase, the last enzyme in the mitochondrial electron transport chain which drives oxidative phosphorylation. The respiratory chain contains 3 multisubunit complexes succinate dehydrogenase (complex II, CII), ubiquinol-cytochrome c oxidoreductase (cytochrome b-c1 complex, complex III, CIII) and cytochrome c oxidase (complex IV, CIV), that cooperate to transfer electrons derived from NADH and succinate to molecular oxygen, creating an electrochemical gradient over the inner membrane that drives transmembrane transport and the ATP synthase. Cytochrome c oxidase is the component of the respiratory chain that catalyzes the reduction of oxygen to water. Electrons originating from reduced cytochrome c in the intermembrane space (IMS) are transferred via the dinuclear copper A center (CU(A)) of subunit 2 and heme A of subunit 1 to the active site in subunit 1, a binuclear center (BNC) formed by heme A3 and copper B (CU(B)). The BNC reduces molecular oxygen to 2 water molecules using 4 electrons from cytochrome c in the IMS and 4 protons from the mitochondrial matrix. This chain is Cytochrome c oxidase subunit 2 (cox-2), found in Caenorhabditis remanei (Caenorhabditis vulgaris).